We begin with the raw amino-acid sequence, 1733 residues long: Probable nuclear antigen (1733 aa).

Disordered regions lie at residues 1-41, 71-394, 437-506, 520-548, 882-907, 993-1141, 1223-1242, 1348-1475, 1585-1608, and 1630-1665; these read MNLF…THFT, PHPP…EQQV, AGAG…EGAQ, APAA…EGGA, LGGG…GAAL, AGGP…EDAA, PERV…RGHA, GAGP…GRAG, SGGG…WGSG, and PRRR…RGGC. Residues 21–31 are compositionally biased toward basic residues; sequence DHHHQQHHHHP. Residues 77–97 show a composition bias toward basic and acidic residues; it reads PQDHHRPTPARDHRDPRDHLP. Positions 113–131 are enriched in low complexity; that stretch reads TTTTTIKDPQHPQDPLLLP. Positions 135 to 147 are enriched in basic and acidic residues; the sequence is LQEEDPHLLRPTR. The segment covering 179–189 has biased composition (pro residues); it reads GGGPPSPPPRP. The segment covering 190–201 has biased composition (low complexity); the sequence is STSSSSSHQGPP. The span at 202–220 shows a compositional bias: pro residues; it reads STRPPPPQRPPPRWPPPSP. Polar residues predominate over residues 227–240; sequence RAGSENTAQTLFSH. The segment covering 272-299 has biased composition (pro residues); the sequence is PPPSPPPRPPPPLPPPPPPPPPPQPPPA. Positions 316 to 326 are enriched in basic residues; sequence GGRRRGGKRRR. Residues 336 to 354 show a composition bias toward acidic residues; sequence DAEEEEDGDGDEDEDEDRA. Residues 355 to 364 are compositionally biased toward basic and acidic residues; that stretch reads EGEGREDGGE. 3 stretches are compositionally biased toward gly residues: residues 365-374, 454-466, and 479-494; these read GPRGAGGGAG, GAPG…GLEG, and GGDG…GLGV. The span at 495–506 shows a compositional bias: low complexity; that stretch reads GLQQRRGAEGAQ. The segment covering 882 to 892 has biased composition (gly residues); that stretch reads LGGGGGGGQQR. The segment covering 893–907 has biased composition (low complexity); it reads GSGVRSGPESEGAAL. 2 stretches are compositionally biased toward gly residues: residues 993 to 1004 and 1027 to 1043; these read AGGPGAGEAGGG and AGRG…LGEP. 2 stretches are compositionally biased toward basic and acidic residues: residues 1078 to 1087 and 1100 to 1112; these read GAGDEGDRVR and RVAE…RHLL. Over residues 1116–1127 the composition is skewed to gly residues; the sequence is GPEGGRGAGGRG. A compositionally biased stretch (gly residues) spans 1385–1407; the sequence is GPGGLRGRGRGGRGGGGGGGGRG. 2 stretches are compositionally biased toward basic residues: residues 1408–1420 and 1444–1453; these read PRGR…RRWR and RGGRGGRGGR. The segment covering 1454 to 1474 has biased composition (gly residues); it reads GRGGGRAPRGGGGGPGGGGRA. The span at 1652–1665 shows a compositional bias: gly residues; it reads RGAGRAGGGGRGGC.

The sequence is that of Probable nuclear antigen from Sus scrofa (Pig).